We begin with the raw amino-acid sequence, 368 residues long: Probable dual-specificity RNA methyltransferase RlmN (368 aa).

The active-site Proton acceptor is glutamate 109. The 241-residue stretch at 115 to 355 (YPDRVTMCIS…VTVRDTRGQE (241 aa)) folds into the Radical SAM core domain. Cysteine 122 and cysteine 360 are disulfide-bonded. Residues cysteine 129, cysteine 133, and cysteine 136 each coordinate [4Fe-4S] cluster. S-adenosyl-L-methionine-binding positions include 184–185 (GE), serine 218, 241–243 (SLH), and asparagine 317. The S-methylcysteine intermediate role is filled by cysteine 360.

The protein belongs to the radical SAM superfamily. RlmN family. [4Fe-4S] cluster is required as a cofactor.

Its subcellular location is the cytoplasm. It catalyses the reaction adenosine(2503) in 23S rRNA + 2 reduced [2Fe-2S]-[ferredoxin] + 2 S-adenosyl-L-methionine = 2-methyladenosine(2503) in 23S rRNA + 5'-deoxyadenosine + L-methionine + 2 oxidized [2Fe-2S]-[ferredoxin] + S-adenosyl-L-homocysteine. It carries out the reaction adenosine(37) in tRNA + 2 reduced [2Fe-2S]-[ferredoxin] + 2 S-adenosyl-L-methionine = 2-methyladenosine(37) in tRNA + 5'-deoxyadenosine + L-methionine + 2 oxidized [2Fe-2S]-[ferredoxin] + S-adenosyl-L-homocysteine. Functionally, specifically methylates position 2 of adenine 2503 in 23S rRNA and position 2 of adenine 37 in tRNAs. This chain is Probable dual-specificity RNA methyltransferase RlmN, found in Streptomyces griseus subsp. griseus (strain JCM 4626 / CBS 651.72 / NBRC 13350 / KCC S-0626 / ISP 5235).